The following is a 133-amino-acid chain: Large ribosomal subunit protein uL16 (133 aa).

This sequence belongs to the universal ribosomal protein uL16 family. In terms of assembly, part of the 50S ribosomal subunit.

Functionally, binds 23S rRNA and is also seen to make contacts with the A and possibly P site tRNAs. This chain is Large ribosomal subunit protein uL16, found in Blochmanniella floridana.